We begin with the raw amino-acid sequence, 262 residues long: Ribosomal RNA small subunit methyltransferase A (262 aa).

Residues N14, L16, G41, E62, D87, and N109 each coordinate S-adenosyl-L-methionine.

This sequence belongs to the class I-like SAM-binding methyltransferase superfamily. rRNA adenine N(6)-methyltransferase family. RsmA subfamily.

It localises to the cytoplasm. It catalyses the reaction adenosine(1518)/adenosine(1519) in 16S rRNA + 4 S-adenosyl-L-methionine = N(6)-dimethyladenosine(1518)/N(6)-dimethyladenosine(1519) in 16S rRNA + 4 S-adenosyl-L-homocysteine + 4 H(+). In terms of biological role, specifically dimethylates two adjacent adenosines (A1518 and A1519) in the loop of a conserved hairpin near the 3'-end of 16S rRNA in the 30S particle. May play a critical role in biogenesis of 30S subunits. The protein is Ribosomal RNA small subunit methyltransferase A of Francisella tularensis subsp. tularensis (strain FSC 198).